Here is a 404-residue protein sequence, read N- to C-terminus: Probable protein phosphatase 1N (404 aa).

The 261-residue stretch at 59 to 319 folds into the PPM-type phosphatase domain; sequence RFGASAVQGW…DNMTCMVVCF (261 aa). Positions 96, 97, 267, and 310 each coordinate Mn(2+).

Belongs to the PP2C family. Requires Mg(2+) as cofactor. It depends on Mn(2+) as a cofactor.

It catalyses the reaction O-phospho-L-seryl-[protein] + H2O = L-seryl-[protein] + phosphate. The enzyme catalyses O-phospho-L-threonyl-[protein] + H2O = L-threonyl-[protein] + phosphate. The sequence is that of Probable protein phosphatase 1N (Ppm1n) from Mus musculus (Mouse).